The chain runs to 1377 residues: DNA-directed RNA polymerase subunit beta (1377 aa).

It belongs to the RNA polymerase beta chain family. In terms of assembly, the RNAP catalytic core consists of 2 alpha, 1 beta, 1 beta' and 1 omega subunit. When a sigma factor is associated with the core the holoenzyme is formed, which can initiate transcription.

It catalyses the reaction RNA(n) + a ribonucleoside 5'-triphosphate = RNA(n+1) + diphosphate. Its function is as follows. DNA-dependent RNA polymerase catalyzes the transcription of DNA into RNA using the four ribonucleoside triphosphates as substrates. This Cereibacter sphaeroides (strain ATCC 17029 / ATH 2.4.9) (Rhodobacter sphaeroides) protein is DNA-directed RNA polymerase subunit beta.